Reading from the N-terminus, the 145-residue chain is MAEKAIESVQCFGRKKTAVAVTHCKRGRGLIKINGCPIELVEPEILRFKAVEPILLLGRQRFTGVDMRIRVKGGGHTSQIYAIRQSIAKALVAFYQKYVDEQSKKEIKDILVGYDRTLLVADPRRCEPKKFGGRGARARFQKSYR.

It belongs to the universal ribosomal protein uS9 family.

The protein localises to the cytoplasm. The polypeptide is Small ribosomal subunit protein uS9 (RPS16) (Gossypium hirsutum (Upland cotton)).